The chain runs to 96 residues: Bacterial microcompartment shell protein EutM (96 aa).

One can recognise a BMC domain in the interval 3–87 (ALGMIETRGL…PHGDLEEVFP (85 aa)).

This sequence belongs to the bacterial microcompartments protein family. Homohexamer with a central pore of up to 8.6 Angstroms diameter. The hexamers pack into a two-dimensional array. Interacts with EutQ; a probably cytoplasm-facing helix (Val-49 to Gln-64) interacts with N-terminus of EutQ.

It is found in the bacterial microcompartment. Its pathway is amine and polyamine degradation; ethanolamine degradation. Probably a major component of the bacterial microcompartment (BMC) shell dedicated to ethanolamine degradation. Each homohexamer has a central pore with an opening of up to 8.6 Angstroms. A positively-charged funnel leads to the pore from each side of the hexamer. The pore probably allows metabolite passage into and out of the BMC. Expression of eutK, eutL, eutM, eutN, eutS (eutSMNLK) in E.coli leads to formation of a single BMC. Expression alone leads to thick filaments that interfere with cell separation. Coexpression of eutQ with eutSMNLK permits E.coli to make cells with more than one mobile BMC, as is usual in vivo. May play a role in BMC shell biogenesis. Can replace homolog pduA in the pdu operon, cells grow better than wild-type on 1,2-propanediol and vitamin B12. Protein is incorporated into the pdu BMC microcompartment. In terms of biological role, the ethanolamine (EA) catabolic bacterial microcompartment (BMC) probably concentrates low levels of ethanolamine catabolic enzymes, concentrates volatile reaction intermediates, keeps the level of toxic acetaldehyde low, generates enough acetyl-CoA to support cell growth, and maintains a pool of free coenzyme A (CoA) and NAD. Deletion of BMC genes (eutK, eutL, eutM) restores growth of eutD deletions, suggesting there are dedicated pools of coenzyme A (CoA) and NAD in the BMC. Functionally, expression of the eut operon allows this bacteria to use ethanolamine as a carbon, nitrogen and energy source. It relies on cobalamin (vitamin B12) both as a cofactor for the ethanolamine ammonia-lyase (EAL) activity and to induce the operon. EA enhances bacterial survival in macrophages in a concentration-dependent manner, suggesting it is an important nutrient during infection. This Salmonella typhimurium (strain LT2 / SGSC1412 / ATCC 700720) protein is Bacterial microcompartment shell protein EutM.